Reading from the N-terminus, the 190-residue chain is Membrane protein FAM174A (190 aa).

A signal peptide spans 1–29; the sequence is MPTRRGCSGPCHFLASAFVLLLLPALNQS. N-linked (GlcNAc...) asparagine glycans are attached at residues Asn-27 and Asn-83. Residues 30 to 123 are Extracellular-facing; sequence VVLPSTVPRA…NPSDKPMTQR (94 aa). The interval 37–119 is disordered; it reads PRAVQESKPL…AVSPNPSDKP (83 aa). Residues 124–144 form a helical membrane-spanning segment; it reads ALTVLVVVSAAVLVYFVVRTV. Residues 145-190 lie on the Cytoplasmic side of the membrane; it reads RMRRRNRKTRRYGVLDTNIENMELTPLEQDDEDDDNTLFDANHPRR. Residues 168 to 190 form a disordered region; it reads LTPLEQDDEDDDNTLFDANHPRR. Positions 172-181 are enriched in acidic residues; it reads EQDDEDDDNT.

Belongs to the FAM174 family.

It is found in the membrane. The sequence is that of Membrane protein FAM174A (Fam174a) from Rattus norvegicus (Rat).